The primary structure comprises 466 residues: Histidine--tRNA ligase (466 aa).

It belongs to the class-II aminoacyl-tRNA synthetase family. Homodimer.

The protein resides in the cytoplasm. The catalysed reaction is tRNA(His) + L-histidine + ATP = L-histidyl-tRNA(His) + AMP + diphosphate + H(+). This Bifidobacterium longum subsp. infantis (strain ATCC 15697 / DSM 20088 / JCM 1222 / NCTC 11817 / S12) protein is Histidine--tRNA ligase.